The sequence spans 534 residues: Calcium uptake protein 1 homolog, mitochondrial (534 aa).

A mitochondrion-targeting transit peptide spans 1–32 (MLHCSFLRVIPIKNASKRLIIVRSLTSAPAKT). Residues 131–150 (PEASQKEEVTESNGEVEEVK) are disordered. EF-hand domains follow at residues 271-306 (TSHA…IMSQ), 338-359 (KDGK…LQHD), and 466-501 (LSDH…RMRR). Residues Asp284, Asp286, Asn288, and Glu295 each contribute to the Ca(2+) site.

This sequence belongs to the MICU1 family. MICU1 subfamily. Expressed at low levels in PLM touch receptor neurons, germ cells, epidermis, and muscles.

The protein resides in the mitochondrion intermembrane space. It localises to the mitochondrion inner membrane. In terms of biological role, calcium sensor of the mitochondrial calcium uniporter (mcu-1) channel, which senses calcium level via its EF-hand domains. At low calcium levels, micu-1 occludes the pore of the mcu-1 channel, preventing mitochondrial calcium uptake. At higher calcium levels, calcium-binding to micu-1 induces a conformational change that weakens mcu-1-micu-1 interactions and moves micu-1 away from the pore, allowing calcium permeation through the mcu-1 channel. Also required to protect against manganese toxicity by preventing manganese uptake by mcu-1. Modulates the activity of the mitochondrial calcium uniporter protein mcu-1 depending on the level of intracellular calcium in PLM touch receptor neurons following axonal injury. The chain is Calcium uptake protein 1 homolog, mitochondrial from Caenorhabditis elegans.